The following is a 222-amino-acid chain: Ribose-5-phosphate isomerase A (222 aa).

Residues 28–31, 81–84, and 94–97 contribute to the substrate site; these read TGST, DGAD, and KGGG. Glu103 (proton acceptor) is an active-site residue. Residue Lys121 participates in substrate binding.

It belongs to the ribose 5-phosphate isomerase family. In terms of assembly, homodimer.

It carries out the reaction aldehydo-D-ribose 5-phosphate = D-ribulose 5-phosphate. Its pathway is carbohydrate degradation; pentose phosphate pathway; D-ribose 5-phosphate from D-ribulose 5-phosphate (non-oxidative stage): step 1/1. Its function is as follows. Catalyzes the reversible conversion of ribose-5-phosphate to ribulose 5-phosphate. The sequence is that of Ribose-5-phosphate isomerase A from Azoarcus sp. (strain BH72).